A 630-amino-acid polypeptide reads, in one-letter code: PR domain zinc finger protein 5 (630 aa).

The region spanning 8–124 is the SET domain; it reads DRFSLKSSRV…TDTELLIGYL (117 aa). A C2H2-type 1 zinc finger spans residues 167–190; it reads YACPQCESSFTSEDILAEHLQTLH. Residues 199–221 form a C2H2-type 2; atypical zinc finger; that stretch reads FKCKNCGKKFPVKQALQRHVLQC. The C2H2-type 3; atypical zinc-finger motif lies at 234-256; sequence FQCSVCNSSFSSASSFEQHQETC. 13 C2H2-type zinc fingers span residues 262-287, 295-317, 320-342, 348-370, 376-398, 404-426, 432-455, 461-483, 489-511, 517-539, 545-567, 573-595, and 602-625; these read FVCK…ENVH, LICS…RKIH, FDCQ…MITH, YNCE…KVIH, YKCK…KKTH, FQCE…LLIH, FKCH…QVVH, YRCE…KKTH, KICP…IRSH, YQCP…IRTH, YKCS…KRTH, FQCD…KMTH, and AECQ…DNIH.

It belongs to the class V-like SAM-binding methyltransferase superfamily. In terms of assembly, interacts with EHMT2/G9A, GFI1 and HDAC1. Widely expressed with highest levels in colon and ovary. Tends to be silenced in breast, colorectal, gastric and liver cancer tissues.

It localises to the nucleus. Functionally, sequence-specific DNA-binding transcription factor. Represses transcription at least in part by recruitment of the histone methyltransferase EHMT2/G9A and histone deacetylases such as HDAC1. Regulates hematopoiesis-associated protein-coding and microRNA (miRNA) genes. May regulate the expression of proteins involved in extracellular matrix development and maintenance, including fibrillar collagens, such as COL4A1 and COL11A1, connective tissue components, such as HAPLN1, and molecules regulating cell migration and adhesion, including EDIL3 and TGFB2. May cause G2/M arrest and apoptosis in cancer cells. This Homo sapiens (Human) protein is PR domain zinc finger protein 5 (PRDM5).